A 286-amino-acid polypeptide reads, in one-letter code: DNA-directed RNA polymerase subunit Rpo3 (286 aa).

The protein belongs to the archaeal Rpo3/eukaryotic RPB3 RNA polymerase subunit family. In terms of assembly, part of the RNA polymerase complex.

The protein localises to the cytoplasm. The catalysed reaction is RNA(n) + a ribonucleoside 5'-triphosphate = RNA(n+1) + diphosphate. In terms of biological role, DNA-dependent RNA polymerase (RNAP) catalyzes the transcription of DNA into RNA using the four ribonucleoside triphosphates as substrates. The protein is DNA-directed RNA polymerase subunit Rpo3 of Aeropyrum pernix (strain ATCC 700893 / DSM 11879 / JCM 9820 / NBRC 100138 / K1).